A 264-amino-acid polypeptide reads, in one-letter code: Major prion protein (264 aa).

The N-terminal stretch at 1 to 24 (MVKSHIGSWILVLFVAMWSDVGLC) is a signal peptide. Residues 25-41 (KKRPKPGGGWNTGGSRY) are interaction with ADGRG6. An interaction with GRB2, ERI3 and SYN1 region spans residues 25-241 (KKRPKPGGGW…ESQAYYQRGA (217 aa)). The tract at residues 28 to 119 (PKPGGGWNTG…WNKPSKPKTN (92 aa)) is disordered. 6 consecutive repeat copies span residues 54-62 (PQGGGGWGQ), 63-70 (PHGGGWGQ), 71-78 (PHGGGWGQ), 79-86 (PHGGGWGQ), 87-94 (PHGGGWGQ), and 95-103 (PHGGGGWGQ). The interval 54–103 (PQGGGGWGQPHGGGWGQPHGGGWGQPHGGGWGQPHGGGWGQPHGGGGWGQ) is 6 X 8 AA tandem repeats of P-H-G-G-G-W-G-Q. Residues 55 to 107 (QGGGGWGQPHGGGWGQPHGGGWGQPHGGGWGQPHGGGWGQPHGGGGWGQGGTH) are compositionally biased toward gly residues. Cu(2+) contacts are provided by His72, Gly73, Gly74, His80, Gly81, Gly82, His88, Gly89, Gly90, His96, Gly98, and Gly99. Residues Cys190 and Cys225 are joined by a disulfide bond. Residues Asn192 and Asn208 are each glycosylated (N-linked (GlcNAc...) asparagine). Ala241 carries GPI-anchor amidated alanine lipidation. The propeptide at 242-264 (SVILFSSPPVILLISFLIFLIVG) is removed in mature form.

It belongs to the prion family. Monomer and homodimer. Has a tendency to aggregate into amyloid fibrils containing a cross-beta spine, formed by a steric zipper of superposed beta-strands. Soluble oligomers may represent an intermediate stage on the path to fibril formation. Copper binding may promote oligomerization. Interacts with GRB2, APP, ERI3/PRNPIP and SYN1. Mislocalized cytosolically exposed PrP interacts with MGRN1; this interaction alters MGRN1 subcellular location and causes lysosomal enlargement. Interacts with APP. Interacts with KIAA1191. Interacts with ADGRG6.

It localises to the cell membrane. Its subcellular location is the golgi apparatus. Functionally, its primary physiological function is unclear. May play a role in neuronal development and synaptic plasticity. May be required for neuronal myelin sheath maintenance. May promote myelin homeostasis through acting as an agonist for ADGRG6 receptor. May play a role in iron uptake and iron homeostasis. Soluble oligomers are toxic to cultured neuroblastoma cells and induce apoptosis (in vitro). Association with GPC1 (via its heparan sulfate chains) targets PRNP to lipid rafts. Also provides Cu(2+) or Zn(2+) for the ascorbate-mediated GPC1 deaminase degradation of its heparan sulfate side chains. This is Major prion protein (PRNP) from Bos indicus x Bos taurus (Hybrid cattle).